The following is a 104-amino-acid chain: Type VII secretion system extracellular protein B (104 aa).

This sequence belongs to the WXG100 family. In terms of assembly, homodimer. When mixed with EsxA does not form heterodimers.

Its subcellular location is the secreted. Its function is as follows. Virulence factor that is important for the establishment of infection in the host. EsxB is required for EsxA synthesis as well as secretion. Mediates together with EsxA the release of S.aureus from the host cell. Also inhibits host cytokine production and thus modulates dendritic cell-mediated immunity. The polypeptide is Type VII secretion system extracellular protein B (Staphylococcus aureus (strain MSSA476)).